The primary structure comprises 444 residues: MSEETATSDNDNSYARVRAVVMTRDDSSGGWLPLGGSGLSSVTVFKVPHQEENGCADFFIRGERLRDKMVVLECMLKKDLIYNKVTPTFHHWKIDDKKFGLTFQSPADARAFDRGIRRAIEDISQGCPESKNEAEGADDLQANEEDSSSSLVKDHLFQQETVVTSEPYRSSNIRPSPFEDLNARRVYMQSQANQITFGQPGLDIQSRSMEYVQRQISKECGSLKSQNRVPLKSIRHVSFQDEDEIVRINPRDILIRRYADYRHPDMWKNDLERDDADSSIQFSKPDSKKSDYLYSCGDETKLSSPKDSVVFKTQPSSLKIKKSKRRKEDGERSRCVYCQERFNHEENVRGKCQDAPDPIKRCIYQVSCMLCAESMLYHCMSDSEGDFSDPCSCDTSDDKFCLRWLALVALSFIVPCMCCYVPLRMCHRCGEACGCCGGKHKAAG.

Residue Ser-2 is modified to N-acetylserine. Residues 6–123 (ATSDNDNSYA…RGIRRAIEDI (118 aa)) enclose the WH1 domain. Residues 123 to 151 (ISQGCPESKNEAEGADDLQANEEDSSSSL) are disordered. Over residues 135–147 (EGADDLQANEEDS) the composition is skewed to acidic residues. An N6-methyllysine modification is found at Lys-224. In terms of domain architecture, KBD spans 233-285 (SIRHVSFQDEDEIVRINPRDILIRRYADYRHPDMWKNDLERDDADSSIQFSKP). Phosphoserine occurs at positions 238 and 308. Residues 333 to 444 (SRCVYCQERF…CCGGKHKAAG (112 aa)) are required for interaction with TESK1. One can recognise an SPR domain in the interval 334–442 (RCVYCQERFN…CGCCGGKHKA (109 aa)).

Homodimer and heterodimer. Able to interact with SPRED2 to form heterodimers. Interacts (via C-terminus) with TAOK1/MARKK (via C-terminus); the interaction does not affect TAOK1 kinase activity. Interacts (via C-terminus) with TESK1 (via C-terminus); the interaction inhibits TESK1 kinase activity. Interacts with CAV1. Interacts with RAS. Interacts with palmitoyltransferase ZDHHC17/HIP14; the interaction leads to palmitoylation of SPRED1. Palmitoylated by ZDHHC17/HIP14. In terms of processing, phosphorylated on tyrosine. Post-translationally, ubiquitinated. In terms of tissue distribution, weakly expressed in embryonic cell line HEK293.

It is found in the cell membrane. The protein resides in the membrane. The protein localises to the caveola. Its subcellular location is the nucleus. Tyrosine kinase substrate that inhibits growth-factor-mediated activation of MAP kinase. Negatively regulates hematopoiesis of bone marrow. Inhibits fibroblast growth factor (FGF)-induced retinal lens fiber differentiation, probably by inhibiting FGF-mediated phosphorylation of ERK1/2. Attenuates actin stress fiber formation via inhibition of TESK1-mediated phosphorylation of cofilin. Inhibits TGFB-induced epithelial-to-mesenchymal transition in lens epithelial cells. The polypeptide is Sprouty-related, EVH1 domain-containing protein 1 (SPRED1) (Homo sapiens (Human)).